A 189-amino-acid chain; its full sequence is Cancer/testis antigen family 45 member A5 (189 aa).

The segment covering Met-1–Asp-23 has biased composition (basic and acidic residues). 2 disordered regions span residues Met-1–Tyr-27 and Asp-82–Ser-118.

This sequence belongs to the CT45 family. Testis specific. Expressed in cancer cell lines.

The protein resides in the nucleus. The chain is Cancer/testis antigen family 45 member A5 from Homo sapiens (Human).